The following is a 441-amino-acid chain: tRNA modification GTPase MnmE (441 aa).

Positions 21, 79, and 118 each coordinate (6S)-5-formyl-5,6,7,8-tetrahydrofolate. Positions 214–370 constitute a TrmE-type G domain; the sequence is GFKIAIVGKP…LEGYLKTQDT (157 aa). GTP is bound by residues 224-229, 243-249, and 268-271; these read NVGKSS, SDEAGTT, and DTAG. Residues Ser-228 and Thr-249 each coordinate Mg(2+). Lys-441 contributes to the (6S)-5-formyl-5,6,7,8-tetrahydrofolate binding site.

This sequence belongs to the TRAFAC class TrmE-Era-EngA-EngB-Septin-like GTPase superfamily. TrmE GTPase family. As to quaternary structure, homodimer. Heterotetramer of two MnmE and two MnmG subunits. K(+) is required as a cofactor.

It localises to the cytoplasm. Exhibits a very high intrinsic GTPase hydrolysis rate. Involved in the addition of a carboxymethylaminomethyl (cmnm) group at the wobble position (U34) of certain tRNAs, forming tRNA-cmnm(5)s(2)U34. This chain is tRNA modification GTPase MnmE, found in Campylobacter concisus (strain 13826).